The chain runs to 453 residues: Dihydrolipoyllysine-residue succinyltransferase component of 2-oxoglutarate dehydrogenase complex, mitochondrial (453 aa).

Residues 1-67 (MLSRSRCVSR…RFFRTTAVCK (67 aa)) constitute a mitochondrion transit peptide. The Lipoyl-binding domain maps to 70–144 (LVTVKTPAFA…EGGTPLFTLR (75 aa)). The residue at position 81 (serine 81) is a Phosphoserine. Position 110 is an N6-lipoyllysine (lysine 110). The span at 152-172 (KAKPAEAPAAAAPKAEPTAAA) shows a compositional bias: low complexity. The tract at residues 152 to 225 (KAKPAEAPAA…GKGLRSEHRE (74 aa)) is disordered. Lysine 154 carries the N6-acetyllysine modification. Residues 173 to 196 (VPPPAAPIPTQMPPVPSPSQPPSG) show a composition bias toward pro residues. An N6-acetyllysine mark is found at lysine 267, lysine 272, lysine 273, lysine 277, and lysine 307. Residues histidine 424 and aspartate 428 contribute to the active site.

Belongs to the 2-oxoacid dehydrogenase family. In terms of assembly, the 2-oxoglutarate dehydrogenase complex is composed of OGDH (2-oxoglutarate dehydrogenase; E1), DLST (dihydrolipoamide succinyltransferase; E2), DLD (dihydrolipoamide dehydrogenase; E3) and the assembly factor KGD4. It contains multiple copies of the three enzymatic components (E1, E2 and E3). In the nucleus, the 2-oxoglutarate dehydrogenase complex associates with KAT2A. Interacts with ABHD11; this interaction maintains the functional lipoylation of the 2-oxoglutarate dehydrogenase complex. (R)-lipoate serves as cofactor.

The protein resides in the mitochondrion matrix. It localises to the nucleus. It catalyses the reaction N(6)-[(R)-dihydrolipoyl]-L-lysyl-[protein] + succinyl-CoA = N(6)-[(R)-S(8)-succinyldihydrolipoyl]-L-lysyl-[protein] + CoA. It participates in amino-acid degradation; L-lysine degradation via saccharopine pathway; glutaryl-CoA from L-lysine: step 6/6. Its pathway is carbohydrate metabolism; tricarboxylic acid cycle. Functionally, dihydrolipoamide succinyltransferase (E2) component of the 2-oxoglutarate dehydrogenase complex. The 2-oxoglutarate dehydrogenase complex catalyzes the overall conversion of 2-oxoglutarate to succinyl-CoA and CO(2). The 2-oxoglutarate dehydrogenase complex is mainly active in the mitochondrion. A fraction of the 2-oxoglutarate dehydrogenase complex also localizes in the nucleus and is required for lysine succinylation of histones: associates with KAT2A on chromatin and provides succinyl-CoA to histone succinyltransferase KAT2A. The chain is Dihydrolipoyllysine-residue succinyltransferase component of 2-oxoglutarate dehydrogenase complex, mitochondrial from Homo sapiens (Human).